Reading from the N-terminus, the 264-residue chain is MKPTTVSTLRQWKQQGEKFASITAYDFSFARLFADEGIQVMLVGDSLGMVVQGHDSTLPVTLADIVYHTEVVRRGAPAALLLADLPFMSYATPEQTFDSAARLMRAGANMVKLEGGKWLAETVKQLTERAVPVCGHLGLTPQSVNIFGGYKVQGRDAEAADLLLEDALALEAAGMQLLVLECVPVALAKRVTEALSIPVIGIGAGNATDGQILVMHDAFGITGGHIPKFAKNFLAETGDIRAAVRQYVEEVKAGSYPAEQHSFQ.

Residues Asp-45 and Asp-84 each contribute to the Mg(2+) site. 3-methyl-2-oxobutanoate-binding positions include 45–46, Asp-84, and Lys-112; that span reads DS. Glu-114 serves as a coordination point for Mg(2+). The Proton acceptor role is filled by Glu-181.

This sequence belongs to the PanB family. In terms of assembly, homodecamer; pentamer of dimers. Mg(2+) serves as cofactor.

The protein resides in the cytoplasm. The catalysed reaction is 3-methyl-2-oxobutanoate + (6R)-5,10-methylene-5,6,7,8-tetrahydrofolate + H2O = 2-dehydropantoate + (6S)-5,6,7,8-tetrahydrofolate. Its pathway is cofactor biosynthesis; (R)-pantothenate biosynthesis; (R)-pantoate from 3-methyl-2-oxobutanoate: step 1/2. In terms of biological role, catalyzes the reversible reaction in which hydroxymethyl group from 5,10-methylenetetrahydrofolate is transferred onto alpha-ketoisovalerate to form ketopantoate. The protein is 3-methyl-2-oxobutanoate hydroxymethyltransferase of Erwinia tasmaniensis (strain DSM 17950 / CFBP 7177 / CIP 109463 / NCPPB 4357 / Et1/99).